The sequence spans 217 residues: Choline transport system permease protein OpuBB (217 aa).

In terms of domain architecture, ABC transmembrane type-1 spans 19 to 198; sequence TYEHITISLI…ILAIVIDYVL (180 aa). Transmembrane regions (helical) follow at residues 23–43, 52–74, 84–101, 128–148, 150–170, and 180–200; these read ITISLIAVILGVLVAVPLGVV, GTIIGIVNIIQTLPSLAILAFFI, AIVALFFYSVLPILRNTY, LVELPLAAPVIMAGIRTSTIY, IGWATLASFIGGGGLGDYIFI, and IIGGAVPVTILAIVIDYVLAV.

It belongs to the binding-protein-dependent transport system permease family. CysTW subfamily.

The protein localises to the cell membrane. Involved in a high affinity multicomponent binding-protein-dependent transport system for choline; probably responsible for the translocation of the substrate across the membrane. This chain is Choline transport system permease protein OpuBB (opuBB), found in Bacillus subtilis (strain 168).